The following is a 62-amino-acid chain: DNA-directed RNA polymerase subunit Rpo10 (62 aa).

4 residues coordinate Zn(2+): Cys-6, Cys-9, Cys-43, and Cys-44.

This sequence belongs to the archaeal Rpo10/eukaryotic RPB10 RNA polymerase subunit family. Part of the RNA polymerase complex. Zn(2+) serves as cofactor.

The protein localises to the cytoplasm. It carries out the reaction RNA(n) + a ribonucleoside 5'-triphosphate = RNA(n+1) + diphosphate. In terms of biological role, DNA-dependent RNA polymerase (RNAP) catalyzes the transcription of DNA into RNA using the four ribonucleoside triphosphates as substrates. This Methanospirillum hungatei JF-1 (strain ATCC 27890 / DSM 864 / NBRC 100397 / JF-1) protein is DNA-directed RNA polymerase subunit Rpo10.